Consider the following 896-residue polypeptide: Serine/threonine-protein kinase TAO3 (896 aa).

One can recognise a Protein kinase domain in the interval 24–277 (FVDLHEIGHG…SLELLRHDFV (254 aa)). ATP-binding positions include 30–38 (IGHGSFGAV) and Lys-53. The active-site Proton acceptor is Asp-147. 2 disordered regions span residues 316–366 (SRNG…SVNS) and 403–423 (DEAD…VQSQ). The span at 334–348 (GTSLTRKMDSLGSNH) shows a compositional bias: polar residues. A compositionally biased stretch (low complexity) spans 349–366 (SIPSTSVSTGSQSSSVNS). Residues 403-414 (DEADHRDPRPEL) show a composition bias toward basic and acidic residues. Coiled-coil stretches lie at residues 450-513 (EQEN…SKRQ), 545-650 (SFLE…LIRQ), and 752-873 (LKSL…IETF). Residues 565–587 (LNEDHSTPKKEKQERISKHKENL) show a composition bias toward basic and acidic residues. Residues 565 to 593 (LNEDHSTPKKEKQERISKHKENLQHTQAE) are disordered.

This sequence belongs to the protein kinase superfamily. STE Ser/Thr protein kinase family. STE20 subfamily.

The protein resides in the cytoplasm. It localises to the cell membrane. The protein localises to the membrane raft. Its subcellular location is the lipid droplet. The enzyme catalyses L-seryl-[protein] + ATP = O-phospho-L-seryl-[protein] + ADP + H(+). The catalysed reaction is L-threonyl-[protein] + ATP = O-phospho-L-threonyl-[protein] + ADP + H(+). Serine/threonine-protein kinase that acts as a regulator of the p38/MAPK14 stress-activated MAPK cascade and of the MAPK8/JNK cascade. In response to DNA damage, involved in the G2/M transition DNA damage checkpoint by activating the p38/MAPK14 stress-activated MAPK cascade, probably by mediating phosphorylation of upstream MAP kinase kinases. Inhibits basal activity of the MAPK8/JNK cascade. In Xenopus laevis (African clawed frog), this protein is Serine/threonine-protein kinase TAO3 (taok3).